A 307-amino-acid polypeptide reads, in one-letter code: tRNA dimethylallyltransferase (307 aa).

Position 10–17 (10–17) interacts with ATP; the sequence is GPTAVGKT. Position 12–17 (12–17) interacts with substrate; the sequence is TAVGKT. Residues 35–38 form an interaction with substrate tRNA region; it reads DSMQ.

It belongs to the IPP transferase family. Monomer. It depends on Mg(2+) as a cofactor.

The enzyme catalyses adenosine(37) in tRNA + dimethylallyl diphosphate = N(6)-dimethylallyladenosine(37) in tRNA + diphosphate. Catalyzes the transfer of a dimethylallyl group onto the adenine at position 37 in tRNAs that read codons beginning with uridine, leading to the formation of N6-(dimethylallyl)adenosine (i(6)A). The protein is tRNA dimethylallyltransferase of Ligilactobacillus salivarius (strain UCC118) (Lactobacillus salivarius).